We begin with the raw amino-acid sequence, 206 residues long: Ion-translocating oxidoreductase complex subunit G (206 aa).

Residues 9 to 29 (GITLALFAAGSTGLTAVINQM) form a helical membrane-spanning segment. Thr174 is modified (FMN phosphoryl threonine).

This sequence belongs to the RnfG family. As to quaternary structure, the complex is composed of six subunits: RsxA, RsxB, RsxC, RsxD, RsxE and RsxG. FMN serves as cofactor.

The protein localises to the cell inner membrane. Functionally, part of a membrane-bound complex that couples electron transfer with translocation of ions across the membrane. Required to maintain the reduced state of SoxR. The chain is Ion-translocating oxidoreductase complex subunit G from Salmonella typhimurium (strain LT2 / SGSC1412 / ATCC 700720).